Consider the following 76-residue polypeptide: Small ribosomal subunit protein bS18 (76 aa).

Belongs to the bacterial ribosomal protein bS18 family. Part of the 30S ribosomal subunit. Forms a tight heterodimer with protein bS6.

In terms of biological role, binds as a heterodimer with protein bS6 to the central domain of the 16S rRNA, where it helps stabilize the platform of the 30S subunit. This Xanthomonas euvesicatoria pv. vesicatoria (strain 85-10) (Xanthomonas campestris pv. vesicatoria) protein is Small ribosomal subunit protein bS18.